The chain runs to 280 residues: MTVEYTASDLATYQNEVNEQIAKNKAHLESLTHPGSKVTFPIDQDISATPQNPNLKVFFFDIDNCLYKSSTRIHDLMQQSILRFFQTHLKLSPEDAHVLNNSYYKEYGLAIRGLVMFHKVNALEYNRLVDDSLPLQDILKPDIPLRNMLLRLRQSGKIDKLWLFTNAYKNHAIRCLRLLGIADLFDGLTYCDYSRTDTLVCKPHVKAFEKAMKESGLARYENAYFIDDSGKNIETGIKLGMKTCIHLVENEVNEILGQTPEGAIVISDILELPHVVSDLF.

This sequence belongs to the SSM1 family.

Could be an enzyme that inactivates 6-azauracil by modifying it. The sequence is that of Suppressor of disruption of TFIIS (SDT1) from Saccharomyces cerevisiae (strain ATCC 204508 / S288c) (Baker's yeast).